The primary structure comprises 539 residues: Gamma-2-syntrophin (539 aa).

One can recognise a PDZ domain in the interval 73–156 (TVTLRRQPVG…EVTITVEYLR (84 aa)). Composition is skewed to low complexity over residues 168-183 (SPGP…SSPL) and 194-205 (SSTTAPSSPSSP). Residues 168–209 (SPGPSSDHSSGASSPLFDSGLHLNGNSSTTAPSSPSSPIAKD) are disordered. The 126-residue stretch at 296-421 (QVVHMGWVNE…WEKSFQRATF (126 aa)) folds into the PH domain.

Belongs to the syntrophin family. Interacts with the dystrophin protein DMD and related proteins DTNA and DTNB. In terms of tissue distribution, widely expressed. Strong expression in brain and testis. In CNS, it is expressed in the perikaryon and proximal portion of the neuronal processes. Strong expression in the hippocampus, neuron-rich dendate granule cells, and pyramidal cell layers. Highly expressed in neurons of the cerebral cortex. Also expressed in the cerebellar cortex, deep cerebellar nuclei, thalamus, and basal ganglia.

It is found in the cell membrane. It localises to the sarcolemma. The protein resides in the cytoplasm. The protein localises to the cytoskeleton. In terms of biological role, adapter protein that binds to and probably organizes the subcellular localization of a variety of proteins. May link various receptors to the actin cytoskeleton and the dystrophin glycoprotein complex. This is Gamma-2-syntrophin (SNTG2) from Homo sapiens (Human).